The following is a 340-amino-acid chain: Transcription initiation factor IIB (340 aa).

Residues 16–49 (VKMICSECREDPPNLVEEFSSGDTVCGSCGLVLG) form a TFIIB-type zinc finger. Zn(2+) is bound by residues Cys-20, Cys-23, Cys-41, and Cys-44. Tandem repeats lie at residues 128–204 (MCDA…TLQR) and 239–315 (FCNR…LLHA).

It belongs to the TFIIB family. Associates with TFIID-IIA (DA complex) to form TFIID-IIA-IIB (DAB-complex) which is then recognized by polymerase II.

It is found in the nucleus. Functionally, general factor that plays a major role in the activation of eukaryotic genes transcribed by RNA polymerase II. This is Transcription initiation factor IIB (sua7) from Schizosaccharomyces pombe (strain 972 / ATCC 24843) (Fission yeast).